We begin with the raw amino-acid sequence, 502 residues long: ATP synthase subunit alpha (502 aa).

169–176 serves as a coordination point for ATP; that stretch reads GDRQTGKT.

The protein belongs to the ATPase alpha/beta chains family. In terms of assembly, F-type ATPases have 2 components, CF(1) - the catalytic core - and CF(0) - the membrane proton channel. CF(1) has five subunits: alpha(3), beta(3), gamma(1), delta(1), epsilon(1). CF(0) has three main subunits: a(1), b(2) and c(9-12). The alpha and beta chains form an alternating ring which encloses part of the gamma chain. CF(1) is attached to CF(0) by a central stalk formed by the gamma and epsilon chains, while a peripheral stalk is formed by the delta and b chains.

The protein localises to the cell membrane. The catalysed reaction is ATP + H2O + 4 H(+)(in) = ADP + phosphate + 5 H(+)(out). Its function is as follows. Produces ATP from ADP in the presence of a proton gradient across the membrane. The alpha chain is a regulatory subunit. The protein is ATP synthase subunit alpha of Priestia megaterium (strain ATCC 12872 / QMB1551) (Bacillus megaterium).